A 434-amino-acid polypeptide reads, in one-letter code: Chaperone SurA (434 aa).

The first 22 residues, M1–A22, serve as a signal peptide directing secretion. PpiC domains are found at residues T173–D274 and V283–D383.

The protein localises to the periplasm. The enzyme catalyses [protein]-peptidylproline (omega=180) = [protein]-peptidylproline (omega=0). Its function is as follows. Chaperone involved in the correct folding and assembly of outer membrane proteins. Recognizes specific patterns of aromatic residues and the orientation of their side chains, which are found more frequently in integral outer membrane proteins. May act in both early periplasmic and late outer membrane-associated steps of protein maturation. The protein is Chaperone SurA of Photobacterium profundum (strain SS9).